The primary structure comprises 119 residues: UPF0342 protein Athe_0692 (119 aa).

The protein belongs to the UPF0342 family.

The sequence is that of UPF0342 protein Athe_0692 from Caldicellulosiruptor bescii (strain ATCC BAA-1888 / DSM 6725 / KCTC 15123 / Z-1320) (Anaerocellum thermophilum).